The chain runs to 144 residues: Putative sugar phosphate isomerase RC0402 (144 aa).

H12 is a binding site for substrate. The active-site Proton donor is H101. R135 is a substrate binding site.

This sequence belongs to the LacAB/RpiB family.

The protein is Putative sugar phosphate isomerase RC0402 of Rickettsia conorii (strain ATCC VR-613 / Malish 7).